The following is a 510-amino-acid chain: Ectonucleoside triphosphate diphosphohydrolase 1 (510 aa).

At methionine 1–asparagine 16 the chain is on the cytoplasmic side. Residues isoleucine 17–leucine 37 form a helical membrane-spanning segment. Residues threonine 38–tyrosine 477 are Extracellular-facing. A glycan (N-linked (GlcNAc...) asparagine) is linked at asparagine 73. A disulfide bond links cysteine 84 and cysteine 108. The active-site Proton acceptor is glutamate 174. Residues asparagine 245, asparagine 274, asparagine 291, and asparagine 333 are each glycosylated (N-linked (GlcNAc...) asparagine). 2 cysteine pairs are disulfide-bonded: cysteine 255–cysteine 300 and cysteine 281–cysteine 324. Cysteine 337 and cysteine 342 are disulfide-bonded. N-linked (GlcNAc...) asparagine glycosylation occurs at asparagine 370. A disulfide bond links cysteine 390 and cysteine 413. Asparagine 457 carries N-linked (GlcNAc...) asparagine glycosylation. Residues valine 478–valine 498 traverse the membrane as a helical segment. The Cytoplasmic segment spans residues cysteine 499–valine 510.

The protein belongs to the GDA1/CD39 NTPase family. As to quaternary structure, homodimer; disulfide-linked. Requires Ca(2+) as cofactor. The cofactor is Mg(2+). Post-translationally, N-glycosylated. In terms of processing, cleaved into two polypeptides that seem to stay together by non-covalent interactions. The N-terminus is blocked. Post-translationally, palmitoylated on Cys-13; which is required for caveola targeting. As to expression, highest expression found in vascular endothelium, smooth muscle, spleen and lung (at protein level). High expression also found in stomach, duodenum, kidney, lymph node and aorta (at protein level).

It localises to the membrane. It is found in the caveola. It catalyses the reaction a ribonucleoside 5'-triphosphate + 2 H2O = a ribonucleoside 5'-phosphate + 2 phosphate + 2 H(+). It carries out the reaction a ribonucleoside 5'-triphosphate + H2O = a ribonucleoside 5'-diphosphate + phosphate + H(+). The catalysed reaction is a ribonucleoside 5'-diphosphate + H2O = a ribonucleoside 5'-phosphate + phosphate + H(+). The enzyme catalyses ATP + 2 H2O = AMP + 2 phosphate + 2 H(+). It catalyses the reaction ATP + H2O = ADP + phosphate + H(+). It carries out the reaction ADP + H2O = AMP + phosphate + H(+). The catalysed reaction is CTP + 2 H2O = CMP + 2 phosphate + 2 H(+). The enzyme catalyses CTP + H2O = CDP + phosphate + H(+). It catalyses the reaction CDP + H2O = CMP + phosphate + H(+). It carries out the reaction GTP + 2 H2O = GMP + 2 phosphate + 2 H(+). The catalysed reaction is GTP + H2O = GDP + phosphate + H(+). The enzyme catalyses GDP + H2O = GMP + phosphate + H(+). It catalyses the reaction ITP + 2 H2O = IMP + 2 phosphate + 2 H(+). It carries out the reaction ITP + H2O = IDP + phosphate + H(+). The catalysed reaction is IDP + H2O = IMP + phosphate + H(+). The enzyme catalyses UTP + 2 H2O = UMP + 2 phosphate + 2 H(+). It catalyses the reaction UTP + H2O = UDP + phosphate + H(+). It carries out the reaction UDP + H2O = UMP + phosphate + H(+). The ATP diphosphohydrolase activity is decreased by half by sodium azide. Catalyzes the hydrolysis of both di- and triphosphate nucleotides (NDPs and NTPs) and hydrolyze NTPs to nucleotide monophosphates (NMPs) in two distinct successive phosphate-releasing steps, with NDPs as intermediates and participates in the regulation of extracellular levels of nucleotides. By hydrolyzing proinflammatory ATP and platelet-activating ADP to AMP, it blocks platelet aggregation and supports blood flow. This is Ectonucleoside triphosphate diphosphohydrolase 1 from Sus scrofa (Pig).